Consider the following 652-residue polypeptide: Vitrin (652 aa).

The first 26 residues, M1–S26, serve as a signal peptide directing secretion. An LCCL domain is found at T40 to F133. 2 cysteine pairs are disulfide-bonded: C46–C62 and C66–C86. 2 disordered regions span residues E137–P181 and T196–L231. Over residues T145–P158 the composition is skewed to low complexity. The span at T196–S212 shows a compositional bias: polar residues. VWFA domains lie at D267–V452 and D469–V638. N-linked (GlcNAc...) asparagine glycosylation is present at N494.

Binds dermatan sulfate and chondroitin sulfate.

The protein localises to the secreted. The protein resides in the extracellular space. Its subcellular location is the extracellular matrix. Its function is as follows. Promotes matrix assembly and cell adhesiveness. Plays a role in spinal cord formation by regulating the proliferation and differentiation of neural stem cells. The polypeptide is Vitrin (VIT) (Bos taurus (Bovine)).